We begin with the raw amino-acid sequence, 406 residues long: Succinylornithine transaminase (406 aa).

K252 is modified (N6-(pyridoxal phosphate)lysine).

Belongs to the class-III pyridoxal-phosphate-dependent aminotransferase family. AstC subfamily. Requires pyridoxal 5'-phosphate as cofactor.

The catalysed reaction is N(2)-succinyl-L-ornithine + 2-oxoglutarate = N-succinyl-L-glutamate 5-semialdehyde + L-glutamate. The protein operates within amino-acid degradation; L-arginine degradation via AST pathway; L-glutamate and succinate from L-arginine: step 3/5. Functionally, catalyzes the transamination of N(2)-succinylornithine and alpha-ketoglutarate into N(2)-succinylglutamate semialdehyde and glutamate. Can also act as an acetylornithine aminotransferase. This is Succinylornithine transaminase from Escherichia coli (strain 55989 / EAEC).